The chain runs to 282 residues: Plant cysteine oxidase 3 (282 aa).

Fe cation is bound by residues H131, H133, and H202.

This sequence belongs to the cysteine dioxygenase family. The cofactor is Fe(2+).

The protein localises to the nucleus. Its subcellular location is the cytoplasm. The catalysed reaction is L-cysteine + O2 = 3-sulfino-L-alanine + H(+). Functionally, catalyzes the oxidation of N-terminal cysteine residues (N-Cys), thus preparing the protein for N-end rule pathway-mediated proteasomal degradation, upstream of the N-end rule enzymes ATE1, ATE2 and PRT6. Controls the preparation of the group VII ethylene response factor (ERF-VII) proteins for degradation via the 26S proteasome N-end rule pathway. Acts as an oxygen sensor that controls the stability of ERF-VII proteins, which are stabilized in flooding-induced hypoxia, and regulate transcriptional adaptation to these adverse conditions. In Arabidopsis thaliana (Mouse-ear cress), this protein is Plant cysteine oxidase 3.